The chain runs to 297 residues: Rhomboid-type serine protease 2 (297 aa).

Transmembrane regions (helical) follow at residues isoleucine 14–leucine 34, isoleucine 60–leucine 80, isoleucine 98–phenylalanine 118, proline 120–isoleucine 140, leucine 155–proline 175, and phenylalanine 179–valine 199. The active-site Nucleophile is the serine 128. Residue histidine 182 is part of the active site. Residues aspartate 268–glutamine 297 are disordered. Polar residues predominate over residues serine 275–glutamine 297.

The protein belongs to the peptidase S54 family.

Its subcellular location is the golgi apparatus membrane. It localises to the golgi apparatus. The protein resides in the cis-Golgi network membrane. It carries out the reaction Cleaves type-1 transmembrane domains using a catalytic dyad composed of serine and histidine that are contributed by different transmembrane domains.. Its function is as follows. Probable rhomboid-type serine protease that catalyzes intramembrane proteolysis. This is Rhomboid-type serine protease 2 (RBD2) from Yarrowia lipolytica (strain CLIB 122 / E 150) (Yeast).